Reading from the N-terminus, the 164-residue chain is Putative pre-16S rRNA nuclease (164 aa).

Belongs to the YqgF nuclease family.

It localises to the cytoplasm. Could be a nuclease involved in processing of the 5'-end of pre-16S rRNA. The chain is Putative pre-16S rRNA nuclease from Synechococcus sp. (strain CC9902).